Here is a 288-residue protein sequence, read N- to C-terminus: ATP phosphoribosyltransferase (288 aa).

This sequence belongs to the ATP phosphoribosyltransferase family. Long subfamily. It depends on Mg(2+) as a cofactor.

Its subcellular location is the cytoplasm. It catalyses the reaction 1-(5-phospho-beta-D-ribosyl)-ATP + diphosphate = 5-phospho-alpha-D-ribose 1-diphosphate + ATP. The protein operates within amino-acid biosynthesis; L-histidine biosynthesis; L-histidine from 5-phospho-alpha-D-ribose 1-diphosphate: step 1/9. Feedback inhibited by histidine. Catalyzes the condensation of ATP and 5-phosphoribose 1-diphosphate to form N'-(5'-phosphoribosyl)-ATP (PR-ATP). Has a crucial role in the pathway because the rate of histidine biosynthesis seems to be controlled primarily by regulation of HisG enzymatic activity. This chain is ATP phosphoribosyltransferase, found in Methanococcus maripaludis (strain C7 / ATCC BAA-1331).